The sequence spans 105 residues: Type VII secretion system extracellular protein D (105 aa).

As to quaternary structure, forms heterodimers with EsxB.

The protein localises to the secreted. The chain is Type VII secretion system extracellular protein D from Staphylococcus aureus (strain USA300).